Consider the following 282-residue polypeptide: NADPH-dependent 7-cyano-7-deazaguanine reductase (282 aa).

82–84 (IES) serves as a coordination point for substrate. 84–85 (SK) serves as a coordination point for NADPH. C189 (thioimide intermediate) is an active-site residue. The active-site Proton donor is D196. 228–229 (HE) is a substrate binding site. 257–258 (RG) contacts NADPH.

Belongs to the GTP cyclohydrolase I family. QueF type 2 subfamily. Homodimer.

Its subcellular location is the cytoplasm. It carries out the reaction 7-aminomethyl-7-carbaguanine + 2 NADP(+) = 7-cyano-7-deazaguanine + 2 NADPH + 3 H(+). The protein operates within tRNA modification; tRNA-queuosine biosynthesis. Functionally, catalyzes the NADPH-dependent reduction of 7-cyano-7-deazaguanine (preQ0) to 7-aminomethyl-7-deazaguanine (preQ1). This chain is NADPH-dependent 7-cyano-7-deazaguanine reductase, found in Delftia acidovorans (strain DSM 14801 / SPH-1).